The chain runs to 512 residues: tRNA-2-methylthio-N(6)-dimethylallyladenosine synthase (512 aa).

The segment at 1–20 is disordered; sequence MLQQADGVSPDRSSCDTPAP. The region spanning 21–137 is the MTTase N-terminal domain; it reads RTFEVRTYGC…LPTLLDRARH (117 aa). Residues Cys-30, Cys-66, Cys-100, Cys-174, Cys-178, and Cys-181 each contribute to the [4Fe-4S] cluster site. The region spanning 160-397 is the Radical SAM core domain; it reads RESAYAAWVS…ELQERISWEE (238 aa). One can recognise a TRAM domain in the interval 399–469; it reads RAQIGREVEL…PHHLIADAGP (71 aa). Basic and acidic residues predominate over residues 470-486; it reads AEHRRTRAGDAHAEGRT. The tract at residues 470 to 512 is disordered; the sequence is AEHRRTRAGDAHAEGRTPKTGVGLGMPGIGAPEPAPVTQGCAL.

The protein belongs to the methylthiotransferase family. MiaB subfamily. In terms of assembly, monomer. The cofactor is [4Fe-4S] cluster.

It localises to the cytoplasm. The catalysed reaction is N(6)-dimethylallyladenosine(37) in tRNA + (sulfur carrier)-SH + AH2 + 2 S-adenosyl-L-methionine = 2-methylsulfanyl-N(6)-dimethylallyladenosine(37) in tRNA + (sulfur carrier)-H + 5'-deoxyadenosine + L-methionine + A + S-adenosyl-L-homocysteine + 2 H(+). Functionally, catalyzes the methylthiolation of N6-(dimethylallyl)adenosine (i(6)A), leading to the formation of 2-methylthio-N6-(dimethylallyl)adenosine (ms(2)i(6)A) at position 37 in tRNAs that read codons beginning with uridine. This chain is tRNA-2-methylthio-N(6)-dimethylallyladenosine synthase, found in Mycolicibacterium gilvum (strain PYR-GCK) (Mycobacterium gilvum (strain PYR-GCK)).